The sequence spans 617 residues: MTVTEPATQRGFPLLPSRLSRGSKATRTTDNTAAALLLTFTVVAILWANSPWAHTYSALLDTHVGFSFGSHHAEMTVKHVVNDALMTFFFFIVGLEVTREFTIGELTDRSRAAVPVVAAAAGLILPAVVFLAFNPSGENAHAWGVVISTDTAFLVGALAIIKPKFPARVRLFLLTLAVVDDVGALIAIAVLYSDNIQVAPLVVAVALLGALALVRYLPKARGPAYAVLGAALWIALYLAGIHPTLAGVAVALLIPVFTPERAPVERAVQQIRAFRQSPNSRYARAASRSLRDSISINERLQTAVSPVVSFVILPLFALVNAGVLLDGPSLTAALRSPLTWGIVAGLVVGKFVGIAGATWLIRRTGLGVLAPGLTLRRIAGGAALSGIGFTISLFIVDIAIDDPSRQDQARIGVLAASVLAFALGWAIFRITDWLSPPEPVGLKLLRPIDPERDHVRGRPDAPLTLVEYGDFECPFCSRVTGAIDEVRAHFGDDLLYVWRHFPLERAHPRAFDAARASEAAALQGRFWEMTHELFTHQDDLEWSDMYRYAVAAGCDIEQFDQDVRVHSSKVLHRVSDDAEDADAMDLNATPTLFVNGKRHRGPWDAASLIRALEAGRG.

Positions 1 to 26 (MTVTEPATQRGFPLLPSRLSRGSKAT) are disordered. The segment at 1–433 (MTVTEPATQR…GWAIFRITDW (433 aa)) is na(+)/H(+) antiporter NhaA. 11 helical membrane-spanning segments follow: residues 33 to 53 (AAALLLTFTVVAILWANSPWA), 75 to 95 (MTVKHVVNDALMTFFFFIVGL), 113 to 133 (AVPVVAAAAGLILPAVVFLAF), 141 to 161 (HAWGVVISTDTAFLVGALAII), 171 to 191 (LFLLTLAVVDDVGALIAIAVL), 198 to 218 (VAPLVVAVALLGALALVRYLP), 234 to 254 (IALYLAGIHPTLAGVAVALLI), 304 to 324 (VSPVVSFVILPLFALVNAGVL), 341 to 361 (GIVAGLVVGKFVGIAGATWLI), 378 to 398 (IAGGAALSGIGFTISLFIVDI), and 411 to 431 (IGVLAASVLAFALGWAIFRIT). The Thioredoxin domain maps to 434–617 (LSPPEPVGLK…LIRALEAGRG (184 aa)).

It in the N-terminal section; belongs to the NhaA Na(+)/H(+) (TC 2.A.33) antiporter family.

Its subcellular location is the cell membrane. The catalysed reaction is Na(+)(in) + 2 H(+)(out) = Na(+)(out) + 2 H(+)(in). Functionally, na(+)/H(+) antiporter that extrudes sodium in exchange for external protons. This chain is Na(+)/H(+) antiporter NhaA 1, found in Mycolicibacterium gilvum (strain PYR-GCK) (Mycobacterium gilvum (strain PYR-GCK)).